A 358-amino-acid polypeptide reads, in one-letter code: Heat-inducible transcription repressor HrcA (358 aa).

It belongs to the HrcA family.

Its function is as follows. Negative regulator of class I heat shock genes (grpE-dnaK-dnaJ and groELS operons). Prevents heat-shock induction of these operons. This chain is Heat-inducible transcription repressor HrcA, found in Caulobacter vibrioides (strain NA1000 / CB15N) (Caulobacter crescentus).